A 541-amino-acid chain; its full sequence is AT-rich interactive domain-containing protein 3A (541 aa).

A disordered region spans residues 17–172 (RLQQELEARQ…KHPNPQAFPT (156 aa)). The span at 55–73 (LKIQRAQAAALAAMRAAAA) shows a compositional bias: low complexity. The segment covering 84-102 (SDEEEEDGESMASDEEDEK) has biased composition (acidic residues). A compositionally biased stretch (basic and acidic residues) spans 103–112 (ERDGESERYP). A compositionally biased stretch (acidic residues) spans 115–144 (GSEEEDLKGKWDEDDFEDEGEEDDYEDMEE). In terms of domain architecture, ARID spans 212–304 (DPKRKEFLDD…YLYPYECEKR (93 aa)). An REKLES domain is found at 407–501 (AALEQLREKL…GVLFAQPPTS (95 aa)). The segment at 408 to 450 (ALEQLREKLESGEPPEKKMALGTEEQQRLQRAIQHNLLAMTAQ) is important for nuclear localization. The segment at 452–473 (PMNIRINSQAEGRQDSAVNLTT) is homodimerization. The interval 497-504 (QPPTSASG) is important for cytoplasmic localization. A disordered region spans residues 499–541 (PTSASGTSKGSSNRTGSIGGGSSTSQAAPPPAPSAPTSNNPSP).

Homodimer.

The protein localises to the nucleus. It localises to the cytoplasm. Functionally, transcription factor required for smad1 and smad2-mediated responses to TGFbeta during mesoderm induction. The chain is AT-rich interactive domain-containing protein 3A (arid3a) from Xenopus tropicalis (Western clawed frog).